Here is a 54-residue protein sequence, read N- to C-terminus: MLYWALIFFVVALVAGVLGFGGISSASAGIAQILFFIFLVIFVVSLIMGLVRRR.

Helical transmembrane passes span 3–23 (YWALIFFVVALVAGVLGFGGI) and 30–50 (IAQILFFIFLVIFVVSLIMGL).

The protein belongs to the UPF0391 family.

Its subcellular location is the cell membrane. This is UPF0391 membrane protein RC1_1636 from Rhodospirillum centenum (strain ATCC 51521 / SW).